We begin with the raw amino-acid sequence, 300 residues long: Tyrosine recombinase XerC (300 aa).

The 87-residue stretch at 2–88 folds into the Core-binding (CB) domain; the sequence is IQEGKLEQQF…SLRSFYTFLL (87 aa). The 186-residue stretch at 109–294 folds into the Tyr recombinase domain; sequence RLPKFFYSEE…TKEHLKSTYM (186 aa). Active-site residues include Arg150, Lys174, His246, Arg249, and His272. The O-(3'-phospho-DNA)-tyrosine intermediate role is filled by Tyr281.

Belongs to the 'phage' integrase family. XerC subfamily. As to quaternary structure, forms a cyclic heterotetrameric complex composed of two molecules of XerC and two molecules of XerD.

It localises to the cytoplasm. Functionally, site-specific tyrosine recombinase, which acts by catalyzing the cutting and rejoining of the recombining DNA molecules. The XerC-XerD complex is essential to convert dimers of the bacterial chromosome into monomers to permit their segregation at cell division. It also contributes to the segregational stability of plasmids. This chain is Tyrosine recombinase XerC, found in Listeria monocytogenes serovar 1/2a (strain ATCC BAA-679 / EGD-e).